Here is a 624-residue protein sequence, read N- to C-terminus: Matrilin-4 (624 aa).

Residues Met-1–Thr-21 form the signal peptide. In terms of domain architecture, VWFA 1 spans Asp-36–Leu-215. Residue Asn-71 is glycosylated (N-linked (GlcNAc...) asparagine). EGF-like domains lie at Gly-217 to Leu-257, Ala-258 to Arg-298, Ala-299 to Arg-339, and Val-340 to Asp-380. 12 disulfides stabilise this stretch: Cys-221/Cys-232, Cys-228/Cys-241, Cys-243/Cys-256, Cys-262/Cys-273, Cys-269/Cys-282, Cys-284/Cys-297, Cys-303/Cys-314, Cys-310/Cys-323, Cys-325/Cys-338, Cys-344/Cys-355, Cys-351/Cys-364, and Cys-366/Cys-379. The N-linked (GlcNAc...) asparagine glycan is linked to Asn-307. The 176-residue stretch at Asp-388–Leu-563 folds into the VWFA 2 domain. The stretch at Glu-590–Arg-623 forms a coiled coil.

As to quaternary structure, interacts with COMP. Lung, brain, sternum, kidney and heart.

The protein localises to the secreted. Its function is as follows. Major component of the extracellular matrix of cartilage. In Mus musculus (Mouse), this protein is Matrilin-4 (Matn4).